The following is a 101-amino-acid chain: Urease subunit beta (101 aa).

Belongs to the urease beta subunit family. In terms of assembly, heterotrimer of UreA (gamma), UreB (beta) and UreC (alpha) subunits. Three heterotrimers associate to form the active enzyme.

The protein resides in the cytoplasm. The enzyme catalyses urea + 2 H2O + H(+) = hydrogencarbonate + 2 NH4(+). It participates in nitrogen metabolism; urea degradation; CO(2) and NH(3) from urea (urease route): step 1/1. In Actinobacillus pleuropneumoniae serotype 7 (strain AP76), this protein is Urease subunit beta.